Consider the following 854-residue polypeptide: Cell division control protein 24 (854 aa).

The segment covering 1-14 (MAIQTRFASGTSLS) has biased composition (polar residues). The tract at residues 1–24 (MAIQTRFASGTSLSDLKPKPSATS) is disordered. One can recognise a Calponin-homology (CH) domain in the interval 135–246 (PNMEDTLLTF…VVETLMNSSP (112 aa)). In terms of domain architecture, DH spans 278-454 (EYVKIIKEFV…KNIARSINEN (177 aa)). In terms of domain architecture, PH spans 478-668 (RISKFGELLY…WSSCLQQLIH (191 aa)). Disordered stretches follow at residues 542-571 (ISASNITDNNGSPHHSYHKRHSNSSSSNNI) and 674-745 (QFKA…FESE). The span at 682–707 (STSTTSSTAKSSSMMSPTTTMNTPNH) shows a compositional bias: low complexity. Residues 761–854 (SILFRISYNN…NEKFLNIRLY (94 aa)) enclose the PB1 domain.

Interacts with AXL2.

Promotes the exchange of CDC42-bound GDP by GTP. Controls the polarity of calmodulin, and the calcium regulatory process of bud emergence. CDC24 may be involved in the initial selection and organization of the budding site. In Saccharomyces cerevisiae (strain ATCC 204508 / S288c) (Baker's yeast), this protein is Cell division control protein 24 (CDC24).